The following is a 438-amino-acid chain: Serine/threonine-protein kinase VIK (438 aa).

Residues 1-31 are disordered; the sequence is MSSDSPAAGDGGEQAAAGTSVPSPSYDKQKE. ANK repeat units lie at residues 36-65, 70-99, and 103-133; these read SRTSLILWHAHQNDAAAVRKLLEEDPTLVH, DKRTPLHVASLHGWIDVVKCLLEFGADVNA, and WKNTPLADAEGARKQKMIELLKSHGGLSYGQ. Residues 162–427 enclose the Protein kinase domain; the sequence is FSNAAMIGKG…KRLEKIKETL (266 aa). Residues 168–176 and lysine 189 contribute to the ATP site; that span reads IGKGSFGEI. The Proton acceptor role is filled by aspartate 285.

This sequence belongs to the protein kinase superfamily. Ser/Thr protein kinase family. In terms of assembly, interacts with BRL2. Binds to MSSP1/TMT1 at the tonoplast. Phosphorylated. As to expression, restricted to mature vascular cells. Mostly expressed in mature leaves and seeds, and, to a lower level, in seedlings, young leaves, flowers and siliques.

The protein localises to the vacuole. The catalysed reaction is L-seryl-[protein] + ATP = O-phospho-L-seryl-[protein] + ADP + H(+). The enzyme catalyses L-threonyl-[protein] + ATP = O-phospho-L-threonyl-[protein] + ADP + H(+). In terms of biological role, serine/threonine protein kinase which may function as an adapter protein for BRL2. Required during vascular development for the establishment of vein pattern in foliar organs. Mediates MSSP1/TMT1 phosphorylation and activation to enhance its carrier activity and consequently vacuolar sugar accumulation, particularly in response to cold. The chain is Serine/threonine-protein kinase VIK from Arabidopsis thaliana (Mouse-ear cress).